We begin with the raw amino-acid sequence, 536 residues long: MHLQRNFFILIFFFISFLLWKTWQQKEFSSDVHKIINKYENVNLVNNNINKLASNIIIKTDVLKIQVNLYGGDIEKAELLHFKSKLNSSQSLVLLDTNENFVYQAQCGITGKDGADNLQKHIRPLYIAKRKYYELSRHNKKIEVPLQWISKDGIIYKKIFVLKSGEYDVSVKYKINNITNKHLKVSMFGQLKQTINLPEDKNTYTNNFALQTFRGAAYSSDNDKYVKYSFDSIVNKEKKNIVVTHSGWVAMLQKYFATSWIPDNSYLNTMYIGSSGDNLAEIGYYSRPIDIFPHSTISLSSKLWIGPEIQNKMAVIASNLDLTVDYGWLWFLSQPLFKLLNFLYNICGNWGVSIILITFIIKGITFPLTKSQFKTMAKIRKLQPKINYIKKKFKNNNQKISEEIMSLYKTEKVNPLGGCFPLFIQMPIFLALYYMLISSVELRHAPFFLWIHDLSDQDPFYVLPILMGVTMFFIQRVTPSNVTDPVQKKIMNYIPILFTVFFLWFPSGLVLYYLISNLVTIIQQKIIIKALNKTLK.

5 consecutive transmembrane segments (helical) span residues 3 to 23 (LQRNFFILIFFFISFLLWKTW), 346 to 366 (ICGNWGVSIILITFIIKGITF), 417 to 437 (GGCFPLFIQMPIFLALYYMLI), 454 to 474 (LSDQDPFYVLPILMGVTMFFI), and 494 to 514 (IPILFTVFFLWFPSGLVLYYL).

This sequence belongs to the OXA1/ALB3/YidC family. Type 1 subfamily. As to quaternary structure, interacts with the Sec translocase complex via SecD. Specifically interacts with transmembrane segments of nascent integral membrane proteins during membrane integration.

It is found in the cell membrane. Its function is as follows. Required for the insertion and/or proper folding and/or complex formation of integral membrane proteins into the membrane. Involved in integration of membrane proteins that insert both dependently and independently of the Sec translocase complex, as well as at least some lipoproteins. Aids folding of multispanning membrane proteins. The protein is Membrane protein insertase YidC of Buchnera aphidicola subsp. Baizongia pistaciae (strain Bp).